The primary structure comprises 158 residues: Transcription elongation factor GreA (158 aa).

The protein belongs to the GreA/GreB family.

Functionally, necessary for efficient RNA polymerase transcription elongation past template-encoded arresting sites. The arresting sites in DNA have the property of trapping a certain fraction of elongating RNA polymerases that pass through, resulting in locked ternary complexes. Cleavage of the nascent transcript by cleavage factors such as GreA or GreB allows the resumption of elongation from the new 3'terminus. GreA releases sequences of 2 to 3 nucleotides. The chain is Transcription elongation factor GreA from Ralstonia nicotianae (strain ATCC BAA-1114 / GMI1000) (Ralstonia solanacearum).